Consider the following 316-residue polypeptide: Taste receptor type 2 member 3 (316 aa).

Over 1–7 (MFGFIEG) the chain is Extracellular. The chain crosses the membrane as a helical span at residues 8–28 (VFLVLTITEFILGNLVNGFIV). Residues 29–50 (SINSSYWFKSKKISLSNFIITS) are Cytoplasmic-facing. The chain crosses the membrane as a helical span at residues 51 to 71 (LALFRIFLLWIIFIDSLIIVF). The Extracellular portion of the chain corresponds to 72–86 (SYQTHDSGIMMQLID). Residues 87 to 107 (VFWTFTNHFSIWLISCLSVFY) traverse the membrane as a helical segment. The Cytoplasmic segment spans residues 108-128 (CLKIASFSHPSFLWLKWRASR). The chain crosses the membrane as a helical span at residues 129-149 (VVVGMLWGALLLSCVSTMSLM). Over 150 to 186 (NEFKIYSALTRSKDTPNMTEYIRLKRQEYNLMHVLGN) the chain is Extracellular. Residue Asn-166 is glycosylated (N-linked (GlcNAc...) asparagine). The helical transmembrane segment at 187–207 (LWKIPSLIVSLVAYLLLLLSL) threads the bilayer. At 208–234 (GKHTQQMQQYSIDSRDQSAEAHKRAMR) the chain is on the cytoplasmic side. A helical transmembrane segment spans residues 235–255 (IISSFLLFFLFYFLSFMILSS). Topologically, residues 256–266 (SRFLPETRIAR) are extracellular. Residues 267–287 (IIGVVISMSYLVGDSFILIVC) form a helical membrane-spanning segment. The Cytoplasmic portion of the chain corresponds to 288–316 (NNKLKHTFVAMLPCECGHLKPGSKGPSAS).

The protein belongs to the G-protein coupled receptor T2R family.

It is found in the membrane. Gustducin-coupled receptor implicated in the perception of bitter compounds in the oral cavity and the gastrointestinal tract. Signals through PLCB2 and the calcium-regulated cation channel TRPM5. This is Taste receptor type 2 member 3 (Tas2r3) from Mus musculus (Mouse).